Consider the following 98-residue polypeptide: DNA-directed RNA polymerase subunit omega (98 aa).

This sequence belongs to the RNA polymerase subunit omega family. The RNAP catalytic core consists of 2 alpha, 1 beta, 1 beta' and 1 omega subunit. When a sigma factor is associated with the core the holoenzyme is formed, which can initiate transcription.

It carries out the reaction RNA(n) + a ribonucleoside 5'-triphosphate = RNA(n+1) + diphosphate. In terms of biological role, promotes RNA polymerase assembly. Latches the N- and C-terminal regions of the beta' subunit thereby facilitating its interaction with the beta and alpha subunits. This Tropheryma whipplei (strain Twist) (Whipple's bacillus) protein is DNA-directed RNA polymerase subunit omega.